A 121-amino-acid chain; its full sequence is Phosphoribosyl-ATP pyrophosphatase (121 aa).

This sequence belongs to the PRA-PH family.

The protein localises to the cytoplasm. It catalyses the reaction 1-(5-phospho-beta-D-ribosyl)-ATP + H2O = 1-(5-phospho-beta-D-ribosyl)-5'-AMP + diphosphate + H(+). It functions in the pathway amino-acid biosynthesis; L-histidine biosynthesis; L-histidine from 5-phospho-alpha-D-ribose 1-diphosphate: step 2/9. In Burkholderia cenocepacia (strain ATCC BAA-245 / DSM 16553 / LMG 16656 / NCTC 13227 / J2315 / CF5610) (Burkholderia cepacia (strain J2315)), this protein is Phosphoribosyl-ATP pyrophosphatase.